Here is a 240-residue protein sequence, read N- to C-terminus: MRGEAVQAQQISLTKYLWFPINREGWPFVGLFALGALLLGQIWGPLGWAGALLTCWCAWFFRDPDRVTPTRDGLVISPADGVVQMVGMVAPPPELDMGDAPRMRISVFMSVFSVHINRCPVDGTIVKCSYRPGKFLDASLDKASADNERMSVRMSRADGREIAFVQIAGLVARRIKCDLKDGQQVRAGQRFGLIRFGSRVDVYLPDGVAPLVSLGQSIIAGETVLADLDSTEGARQGEIR.

Catalysis depends on S198, which acts as the Schiff-base intermediate with substrate; via pyruvic acid. At S198 the chain carries Pyruvic acid (Ser); by autocatalysis.

Belongs to the phosphatidylserine decarboxylase family. PSD-A subfamily. In terms of assembly, heterodimer of a large membrane-associated beta subunit and a small pyruvoyl-containing alpha subunit. The cofactor is pyruvate. In terms of processing, is synthesized initially as an inactive proenzyme. Formation of the active enzyme involves a self-maturation process in which the active site pyruvoyl group is generated from an internal serine residue via an autocatalytic post-translational modification. Two non-identical subunits are generated from the proenzyme in this reaction, and the pyruvate is formed at the N-terminus of the alpha chain, which is derived from the carboxyl end of the proenzyme. The post-translation cleavage follows an unusual pathway, termed non-hydrolytic serinolysis, in which the side chain hydroxyl group of the serine supplies its oxygen atom to form the C-terminus of the beta chain, while the remainder of the serine residue undergoes an oxidative deamination to produce ammonia and the pyruvoyl prosthetic group on the alpha chain.

It is found in the cell membrane. It carries out the reaction a 1,2-diacyl-sn-glycero-3-phospho-L-serine + H(+) = a 1,2-diacyl-sn-glycero-3-phosphoethanolamine + CO2. It functions in the pathway phospholipid metabolism; phosphatidylethanolamine biosynthesis; phosphatidylethanolamine from CDP-diacylglycerol: step 2/2. Catalyzes the formation of phosphatidylethanolamine (PtdEtn) from phosphatidylserine (PtdSer). This Paramagnetospirillum magneticum (strain ATCC 700264 / AMB-1) (Magnetospirillum magneticum) protein is Phosphatidylserine decarboxylase proenzyme.